The sequence spans 71 residues: Conotoxin LvVIB (71 aa).

Positions valine 1–alanine 17 are cleaved as a signal peptide. Residues aspartate 18–threonine 41 constitute a propeptide that is removed on maturation. Cystine bridges form between cysteine 43–cysteine 57, cysteine 50–cysteine 62, and cysteine 56–cysteine 69.

This sequence belongs to the conotoxin O1 superfamily. As to expression, expressed by the venom duct.

Its subcellular location is the secreted. This is Conotoxin LvVIB from Conus lividus (Livid cone).